A 917-amino-acid chain; its full sequence is Coiled-coil domain-containing protein 186 (917 aa).

3 disordered regions span residues 1-52 (MKIR…SGDE), 97-118 (SCAN…PGGD), and 701-769 (TQRR…SVAV). Positions 33–44 (TTEKTSELRDDS) are enriched in basic and acidic residues. Residues 220–736 (RYLQQELTVK…TENGNHDKDI (517 aa)) are a coiled coil. Residues 722-736 (RKLEQTENGNHDKDI) are compositionally biased toward basic and acidic residues. Over residues 737–748 (SSMGSRSSSSGS) the composition is skewed to low complexity. The residue at position 759 (S759) is a Phosphoserine. Coiled-coil stretches lie at residues 778–822 (AMLI…IQSY) and 874–913 (KLQA…LEQR).

In terms of tissue distribution, expressed in postnatal germ cells.

The sequence is that of Coiled-coil domain-containing protein 186 (Ccdc186) from Mus musculus (Mouse).